A 162-amino-acid polypeptide reads, in one-letter code: Endoribonuclease YbeY (162 aa).

Positions 117, 121, and 127 each coordinate Zn(2+).

The protein belongs to the endoribonuclease YbeY family. It depends on Zn(2+) as a cofactor.

The protein resides in the cytoplasm. Single strand-specific metallo-endoribonuclease involved in late-stage 70S ribosome quality control and in maturation of the 3' terminus of the 16S rRNA. This is Endoribonuclease YbeY from Francisella tularensis subsp. novicida (strain U112).